The chain runs to 208 residues: Small ribosomal subunit protein uS2 (208 aa).

Positions 189-208 (KPDQDLPVPPEEFETRLVQT) are disordered.

The protein belongs to the universal ribosomal protein uS2 family.

This chain is Small ribosomal subunit protein uS2, found in Pyrobaculum arsenaticum (strain DSM 13514 / JCM 11321 / PZ6).